A 563-amino-acid chain; its full sequence is Arginine--tRNA ligase (563 aa).

The short motif at 120–130 is the 'HIGH' region element; sequence PNIAKPFHIGH.

Belongs to the class-I aminoacyl-tRNA synthetase family. Monomer.

The protein resides in the cytoplasm. The enzyme catalyses tRNA(Arg) + L-arginine + ATP = L-arginyl-tRNA(Arg) + AMP + diphosphate. This is Arginine--tRNA ligase from Clostridium botulinum (strain 657 / Type Ba4).